The following is a 319-amino-acid chain: Ribonuclease Z (319 aa).

Residues His62, His64, Asp66, His67, His145, Asp215, and His273 each coordinate Zn(2+). Catalysis depends on Asp66, which acts as the Proton acceptor.

The protein belongs to the RNase Z family. In terms of assembly, homodimer. Zn(2+) is required as a cofactor.

It carries out the reaction Endonucleolytic cleavage of RNA, removing extra 3' nucleotides from tRNA precursor, generating 3' termini of tRNAs. A 3'-hydroxy group is left at the tRNA terminus and a 5'-phosphoryl group is left at the trailer molecule.. Zinc phosphodiesterase, which displays some tRNA 3'-processing endonuclease activity. Probably involved in tRNA maturation, by removing a 3'-trailer from precursor tRNA. This is Ribonuclease Z from Borreliella afzelii (strain PKo) (Borrelia afzelii).